The sequence spans 69 residues: Disintegrin EC6 subunit beta (69 aa).

Residues 1–65 form the Disintegrin domain; sequence NSVHPCCDPV…DCPPNPWNGK (65 aa). Intrachain disulfides connect cysteine 6–cysteine 29, cysteine 20–cysteine 26, cysteine 25–cysteine 50, and cysteine 38–cysteine 57. The short motif at 42–44 is the Cell attachment site element; that stretch reads RGD.

It belongs to the venom metalloproteinase (M12B) family. P-II subfamily. P-IIe sub-subfamily. As to quaternary structure, heterodimer with subunit alpha; disulfide-linked. Expressed by the venom gland.

It localises to the secreted. Its function is as follows. Potently inhibits adhesion of alpha-4/beta-1 (ITGA4/ITGB1) and alpha-9/beta-1 (ITGA9/ITGB1) integrins to VCAM1, and adhesion of alpha-5/beta-1 (ITGA5/ITGB1) integrin to fibronectin. Has a much less effect on alpha-IIb/beta-3 (ITGA2B/ITGB3) integrin. Also potently inhibits neutrophil migration across TNF-alpha-activated human umbilical endothelial cells. This Echis carinatus sochureki (Saw-scaled viper) protein is Disintegrin EC6 subunit beta.